We begin with the raw amino-acid sequence, 165 residues long: Glucosamine 6-phosphate N-acetyltransferase 1 (165 aa).

In terms of domain architecture, N-acetyltransferase spans Tyr22–Phe165. Substrate contacts are provided by residues Ser44, Lys92 to Arg95, and Glu104 to Val106. Gly114–Glu119 provides a ligand contact to acetyl-CoA. Position 135 to 136 (Tyr135 to Lys136) interacts with substrate. Tyr149 to Lys151 provides a ligand contact to acetyl-CoA.

The protein belongs to the acetyltransferase family. GNA1 subfamily. As to quaternary structure, homodimer. As to expression, highly expressed in the root elongation zone and at lower levels in leaves and grains.

The protein localises to the endoplasmic reticulum membrane. It catalyses the reaction D-glucosamine 6-phosphate + acetyl-CoA = N-acetyl-D-glucosamine 6-phosphate + CoA + H(+). The protein operates within nucleotide-sugar biosynthesis; UDP-N-acetyl-alpha-D-glucosamine biosynthesis; N-acetyl-alpha-D-glucosamine 1-phosphate from alpha-D-glucosamine 6-phosphate (route I): step 1/2. Its function is as follows. Acetyltransferase involved in de novo biosynthesis of UDP-N-acetylglucosamine (UDP-GlcNAc) in roots and is required for maintaining normal root cell shape. UDP-GlcNAc is an essential metabolite that serves as an initial sugar donor for N-glycan synthesis and thus plays an important role in protein and lipid glycosylation. In Oryza sativa subsp. japonica (Rice), this protein is Glucosamine 6-phosphate N-acetyltransferase 1 (GNA1).